A 202-amino-acid chain; its full sequence is uncharacterized protein (202 aa).

The HTH tetR-type domain occupies Glu13–Leu73. A DNA-binding region (H-T-H motif) is located at residues Gly36–Phe55.

This is an uncharacterized protein from Mycobacterium tuberculosis (strain CDC 1551 / Oshkosh).